A 293-amino-acid chain; its full sequence is uncharacterized protein (293 aa).

Disordered regions lie at residues 20-148 and 226-283; these read ELHS…NNNT and RENQ…GNKN. Composition is skewed to acidic residues over residues 37-47, 56-91, and 99-112; these read LEDDEEYDDDQ, EEFDYDNDYNDEEFYDEDDDFKEDDDEEEEEEDDEM, and NIDDDDYEEDEEEQ. Low complexity-rich tracts occupy residues 117 to 148 and 232 to 283; these read TNNNNNTTTTTPYTTYNNNNNNDINNNNNNNT and NSNS…GNKN.

This is an uncharacterized protein from Dictyostelium discoideum (Social amoeba).